Consider the following 738-residue polypeptide: MENETHYAEAVIDNGSFGTRTIRFETGRLAKQAAGSAVAYLDDDTMVLSATTASKKPKENLDFFPLTVDVEERMYAAGKIPGSFFRREGRPSEDAILTCRLIDRPLRPSFKKGLRNEIQVVATIMALNPDHLYDVVAINAASASTQLAGLPFSGPIGGVRVALINGQWVAFPTHTELEDAVFDMVVAGRALEDGDVAIMMVEAEATEKTIQLVAGGAEAPTEEVVAAGLDAAKPFIKVLCKAQADLAAKAAKPTGEFPVFLDYQDDVLEALTAAVKSELSQALTIAGKQDREAELDRVKEIAAEKLLPQFEGREKEISAAYRSLTKSLVRERVIKDKVRIDGRGVTDIRTLAAEVEAIPRVHGSALFERGETQILGVTTLNMLRMEQQLDTLSPVTRKRYMHNYNFPPYSVGETGRVGSPKRREIGHGALAERAIVPVLPTREEFPYAIRQVSEALGSNGSTSMGSVCASTMSLLNAGVPLKAPVAGIAMGLISQEINGETHYVALTDILGAEDAFGDMDFKVAGTKEFVTALQLDTKLDGIPASVLAAALKQARDARLHILDVMMEAIDTPDEMSPNAPRIITVKIPVDKIGEVIGPKGKMINQIQEDTGAEITIEDDGTIYIGAQVGSQAEAARATINGIANPTMPEVGERYLGTVVKTTTFGAFVSLLPGKDGLLHISQIRKLAGGKRVENVEDVLGVGAKVQVEIAEIDSRGKLSLIPVVEGEGDDEKKDDTDK.

Mg(2+)-binding residues include D514 and D520. Residues 580 to 639 (PRIITVKIPVDKIGEVIGPKGKMINQIQEDTGAEITIEDDGTIYIGAQVGSQAEAARATI) enclose the KH domain. The region spanning 651-723 (GERYLGTVVK…SRGKLSLIPV (73 aa)) is the S1 motif domain.

It belongs to the polyribonucleotide nucleotidyltransferase family. Mg(2+) is required as a cofactor.

It is found in the cytoplasm. The catalysed reaction is RNA(n+1) + phosphate = RNA(n) + a ribonucleoside 5'-diphosphate. Its function is as follows. Involved in mRNA degradation. Catalyzes the phosphorolysis of single-stranded polyribonucleotides processively in the 3'- to 5'-direction. In Streptomyces avermitilis (strain ATCC 31267 / DSM 46492 / JCM 5070 / NBRC 14893 / NCIMB 12804 / NRRL 8165 / MA-4680), this protein is Polyribonucleotide nucleotidyltransferase.